We begin with the raw amino-acid sequence, 429 residues long: Glutamate-1-semialdehyde 2,1-aminomutase 2 (429 aa).

Residue Lys-268 is modified to N6-(pyridoxal phosphate)lysine.

The protein belongs to the class-III pyridoxal-phosphate-dependent aminotransferase family. HemL subfamily. As to quaternary structure, homodimer. Pyridoxal 5'-phosphate serves as cofactor.

It localises to the cytoplasm. The catalysed reaction is (S)-4-amino-5-oxopentanoate = 5-aminolevulinate. Its pathway is porphyrin-containing compound metabolism; protoporphyrin-IX biosynthesis; 5-aminolevulinate from L-glutamyl-tRNA(Glu): step 2/2. This Staphylococcus epidermidis (strain ATCC 35984 / DSM 28319 / BCRC 17069 / CCUG 31568 / BM 3577 / RP62A) protein is Glutamate-1-semialdehyde 2,1-aminomutase 2.